We begin with the raw amino-acid sequence, 349 residues long: Magnesium-protoporphyrin IX monomethyl ester [oxidative] cyclase (349 aa).

Residues 1–10 (MTATTATAPA) show a composition bias toward low complexity. Residues 1–23 (MTATTATAPAMRGGGRNELPPHL) are disordered.

The protein belongs to the AcsF family. It depends on Fe cation as a cofactor.

The catalysed reaction is Mg-protoporphyrin IX 13-monomethyl ester + 3 NADPH + 3 O2 + 2 H(+) = 3,8-divinyl protochlorophyllide a + 3 NADP(+) + 5 H2O. The protein operates within porphyrin-containing compound metabolism; chlorophyll biosynthesis (light-independent). Catalyzes the formation of the isocyclic ring in chlorophyll biosynthesis. Mediates the cyclase reaction, which results in the formation of divinylprotochlorophyllide (Pchlide) characteristic of all chlorophylls from magnesium-protoporphyrin IX 13-monomethyl ester (MgPMME). The sequence is that of Magnesium-protoporphyrin IX monomethyl ester [oxidative] cyclase from Prochlorococcus marinus (strain MIT 9303).